Reading from the N-terminus, the 101-residue chain is MGIRYLLVLVLVLLVLGCEVQGAHMPQQDEATTSSLFTQMQESFYGYWGIAKSAAQGLYEKTYLTTMDEKIREIYNKSTAAVSTYAGIFTDQLLSMLKGDQ.

Residues 1–22 (MGIRYLLVLVLVLLVLGCEVQG) form the signal peptide. The lipid binding stretch occupies residues 66-74 (TMDEKIREI). The segment at 78-101 (STAAVSTYAGIFTDQLLSMLKGDQ) is lipoprotein lipase cofactor.

Belongs to the apolipoprotein C2 family. Proapolipoprotein C-II is synthesized as a sialic acid containing glycoprotein which is subsequently desialylated prior to its proteolytic processing. In terms of processing, proapolipoprotein C-II, the major form found in plasma undergoes proteolytic cleavage of its N-terminal hexapeptide to generate apolipoprotein C-II, which occurs as the minor form in plasma.

Its subcellular location is the secreted. Its function is as follows. Component of chylomicrons, very low-density lipoproteins (VLDL), low-density lipoproteins (LDL), and high-density lipoproteins (HDL) in plasma. Plays an important role in lipoprotein metabolism as an activator of lipoprotein lipase. Both proapolipoprotein C-II and apolipoprotein C-II can activate lipoprotein lipase. In Leptonychotes weddellii (Weddell seal), this protein is Apolipoprotein C-II (APOC2).